The sequence spans 488 residues: MSTLYIAGQWLAGQGEAFTSVNPVTQAVIWSGNGATAAQVESAVQAARQAFPAWAKRSLEERISVLEAFAASLKSRADELARCIGEETGKPLWEAATEVTSMVNKIAISVQSYRERTGEKSGPLGDATAVLRHKPHGVVAVFGPYNFPGHLPNGHIVPALLAGNSVLFKPSELTPKVAELTVQCWIEAGLPAGVLNLLQGARETGIALAANPGIDGLFFTGSSRTGNHLHQQFAGRPDKILALEMGGNNPLVVEQVADLDAAVYTIIQSAFISAGQRCTCARRLLVPQGAWGDTLLARLVAVSATIEVGAFDQQPAPFMGSVISLGAARALMDAQQQLLANGAVALLEMTQPQAQAALLTPGILDVSAVAERPDEELFGPLLQVIRYADFDDAIAEANNTQYGLAAGLLSDSAERYQQFWLESRAGIVNWNKQLTGAASSAPFGGVGASGNHRASAYYAADYCAYPVASLETPSLVLPSALTPGVRLS.

221–226 serves as a coordination point for NAD(+); it reads GSSRTG. Catalysis depends on residues Glu244 and Cys278.

It belongs to the aldehyde dehydrogenase family. AstD subfamily.

The catalysed reaction is N-succinyl-L-glutamate 5-semialdehyde + NAD(+) + H2O = N-succinyl-L-glutamate + NADH + 2 H(+). It functions in the pathway amino-acid degradation; L-arginine degradation via AST pathway; L-glutamate and succinate from L-arginine: step 4/5. Functionally, catalyzes the NAD-dependent reduction of succinylglutamate semialdehyde into succinylglutamate. This Pseudomonas fluorescens (strain ATCC BAA-477 / NRRL B-23932 / Pf-5) protein is N-succinylglutamate 5-semialdehyde dehydrogenase.